A 218-amino-acid chain; its full sequence is Small ribosomal subunit protein uS3c (218 aa).

In terms of domain architecture, KH type-2 spans Val47–Ser118.

This sequence belongs to the universal ribosomal protein uS3 family. Part of the 30S ribosomal subunit.

It localises to the plastid. Its subcellular location is the chloroplast. In Barbarea verna (Land cress), this protein is Small ribosomal subunit protein uS3c (rps3).